Here is a 463-residue protein sequence, read N- to C-terminus: Argininosuccinate lyase (463 aa).

This sequence belongs to the lyase 1 family. Argininosuccinate lyase subfamily.

It is found in the cytoplasm. The enzyme catalyses 2-(N(omega)-L-arginino)succinate = fumarate + L-arginine. The protein operates within amino-acid biosynthesis; L-arginine biosynthesis; L-arginine from L-ornithine and carbamoyl phosphate: step 3/3. The sequence is that of Argininosuccinate lyase from Bacillus cereus (strain AH187).